The chain runs to 597 residues: Hydrogenase-1 large chain (597 aa).

Cys76, Cys79, Cys576, and Cys579 together coordinate Ni(2+).

It belongs to the [NiFe]/[NiFeSe] hydrogenase large subunit family. Heterodimer of a large and a small subunit. Ni(2+) serves as cofactor.

It is found in the cell membrane. It catalyses the reaction H2 + A = AH2. Functionally, this is one of three E.coli hydrogenases synthesized in response to different physiological conditions. HYD1 is believed to have a role in hydrogen cycling during fermentative growth. The polypeptide is Hydrogenase-1 large chain (hyaB) (Escherichia coli (strain K12)).